We begin with the raw amino-acid sequence, 292 residues long: Phosphatidylglycerol--prolipoprotein diacylglyceryl transferase (292 aa).

Helical transmembrane passes span I7–E27, F45–A65, L83–W103, and I116–I136. R165 serves as a coordination point for a 1,2-diacyl-sn-glycero-3-phospho-(1'-sn-glycerol). The next 2 membrane-spanning stretches (helical) occupy residues P204–V224 and A264–I284.

The protein belongs to the Lgt family.

The protein localises to the cell inner membrane. The enzyme catalyses L-cysteinyl-[prolipoprotein] + a 1,2-diacyl-sn-glycero-3-phospho-(1'-sn-glycerol) = an S-1,2-diacyl-sn-glyceryl-L-cysteinyl-[prolipoprotein] + sn-glycerol 1-phosphate + H(+). Its pathway is protein modification; lipoprotein biosynthesis (diacylglyceryl transfer). In terms of biological role, catalyzes the transfer of the diacylglyceryl group from phosphatidylglycerol to the sulfhydryl group of the N-terminal cysteine of a prolipoprotein, the first step in the formation of mature lipoproteins. The protein is Phosphatidylglycerol--prolipoprotein diacylglyceryl transferase of Fervidobacterium nodosum (strain ATCC 35602 / DSM 5306 / Rt17-B1).